A 575-amino-acid chain; its full sequence is Electron transfer flavoprotein-ubiquinone oxidoreductase, mitochondrial (575 aa).

Residues 1–33 (MQRVLRAAAAGIGHASGHRAPRWGAAAAAARWL) constitute a mitochondrion transit peptide. Residue 44-58 (VVVVGAGPAGLAAAI) coordinates FAD. Residues 82–103 (VGAHVLSGNVFEPRALDELIPK) lie within the membrane without spanning it. Residues Gly276 and Gly277 each coordinate a ubiquinone. Residues 343-363 (IPNPVFPGGAIIGCSAGFLNV) lie within the membrane without spanning it. Cys520, Cys544, Cys547, and Cys550 together coordinate [4Fe-4S] cluster. The 4Fe-4S ferredoxin-type domain maps to 535-564 (QKLHINAQNCLHCKACDIKDPKQNIEWTVP).

It belongs to the ETF-QO/FixC family. [4Fe-4S] cluster is required as a cofactor. FAD serves as cofactor.

The protein resides in the mitochondrion inner membrane. It carries out the reaction a ubiquinone + reduced [electron-transfer flavoprotein] = a ubiquinol + oxidized [electron-transfer flavoprotein] + H(+). Functionally, accepts electrons from ETF and reduces ubiquinone. The protein is Electron transfer flavoprotein-ubiquinone oxidoreductase, mitochondrial of Oryza sativa subsp. japonica (Rice).